We begin with the raw amino-acid sequence, 200 residues long: Peptidyl-tRNA hydrolase (200 aa).

A tRNA-binding site is contributed by Y14. The active-site Proton acceptor is the H19. TRNA-binding residues include F64, N66, and N112.

The protein belongs to the PTH family. As to quaternary structure, monomer.

Its subcellular location is the cytoplasm. It catalyses the reaction an N-acyl-L-alpha-aminoacyl-tRNA + H2O = an N-acyl-L-amino acid + a tRNA + H(+). Its function is as follows. Hydrolyzes ribosome-free peptidyl-tRNAs (with 1 or more amino acids incorporated), which drop off the ribosome during protein synthesis, or as a result of ribosome stalling. Catalyzes the release of premature peptidyl moieties from peptidyl-tRNA molecules trapped in stalled 50S ribosomal subunits, and thus maintains levels of free tRNAs and 50S ribosomes. The polypeptide is Peptidyl-tRNA hydrolase (Maricaulis maris (strain MCS10) (Caulobacter maris)).